The following is a 575-amino-acid chain: Alpha-(1,6)-fucosyltransferase (575 aa).

The Cytoplasmic portion of the chain corresponds to 1–9 (MRAWTGSWR). Residues 10-30 (WIMLILFAWGTLLFYIGGHLV) traverse the membrane as a helical; Signal-anchor for type II membrane protein segment. Topologically, residues 31–575 (RDNDHPDHSS…KYPTYPEAEK (545 aa)) are lumenal. Cystine bridges form between Cys-204-Cys-266, Cys-212-Cys-230, and Cys-218-Cys-222. The 288-residue stretch at 206–493 (KARKLVCNIN…PDASANFHSL (288 aa)) folds into the GT23 domain. The residue at position 278 (Ser-278) is a Phosphoserine. Residues 299–305 (PRPPYLP) carry the SH3-binding motif. Residues 365–366 (RR) form an important for donor substrate binding region. A disulfide bridge connects residues Cys-465 and Cys-472. One can recognise an SH3 domain in the interval 502 to 563 (QNAHNQIAVY…PSYKVREKIE (62 aa)).

This sequence belongs to the glycosyltransferase 23 family. Tyrosine phosphorylated by PKDCC/VLK.

The protein resides in the golgi apparatus. It localises to the golgi stack membrane. The enzyme catalyses N(4)-{beta-D-GlcNAc-(1-&gt;2)-alpha-D-Man-(1-&gt;3)-[beta-D-GlcNAc-(1-&gt;2)-alpha-D-Man-(1-&gt;6)]-beta-D-Man-(1-&gt;4)-beta-D-GlcNAc-(1-&gt;4)-beta-D-GlcNAc}-L-asparaginyl-[protein] + GDP-beta-L-fucose = an N(4)-{beta-D-GlcNAc-(1-&gt;2)-alpha-D-Man-(1-&gt;3)-[beta-D-GlcNAc-(1-&gt;2)-alpha-D-Man-(1-&gt;6)]-beta-D-Man-(1-&gt;4)-beta-D-GlcNAc-(1-&gt;4)-[alpha-L-Fuc-(1-&gt;6)]-beta-D-GlcNAc}-L-asparaginyl-[protein] + GDP + H(+). Its pathway is protein modification; protein glycosylation. In terms of biological role, catalyzes the addition of fucose in alpha 1-6 linkage to the first GlcNAc residue, next to the peptide chains in N-glycans. The polypeptide is Alpha-(1,6)-fucosyltransferase (Fut8) (Mus musculus (Mouse)).